The primary structure comprises 201 residues: Recombination protein RecR (201 aa).

The C4-type zinc-finger motif lies at 60–75; that stretch reads CSCCGNVDTIDPCTVC. The region spanning 83-178 is the Toprim domain; the sequence is AVIIVVEDVA…RITRLAHGVP (96 aa).

The protein belongs to the RecR family.

In terms of biological role, may play a role in DNA repair. It seems to be involved in an RecBC-independent recombinational process of DNA repair. It may act with RecF and RecO. The chain is Recombination protein RecR from Sinorhizobium medicae (strain WSM419) (Ensifer medicae).